A 186-amino-acid chain; its full sequence is uncharacterized protein (186 aa).

Positions 1-28 are cleaved as a signal peptide; it reads MSVKPAALFRISAALAVAGLGASLIASA.

This is an uncharacterized protein from Rhizobium meliloti (strain 1021) (Ensifer meliloti).